The sequence spans 213 residues: dTTP/UTP pyrophosphatase (213 aa).

Residue aspartate 92 is the Proton acceptor of the active site.

It belongs to the Maf family. YhdE subfamily. A divalent metal cation serves as cofactor.

It is found in the cytoplasm. It catalyses the reaction dTTP + H2O = dTMP + diphosphate + H(+). The enzyme catalyses UTP + H2O = UMP + diphosphate + H(+). In terms of biological role, nucleoside triphosphate pyrophosphatase that hydrolyzes dTTP and UTP. May have a dual role in cell division arrest and in preventing the incorporation of modified nucleotides into cellular nucleic acids. This chain is dTTP/UTP pyrophosphatase, found in Granulibacter bethesdensis (strain ATCC BAA-1260 / CGDNIH1).